A 147-amino-acid chain; its full sequence is Hemoglobin subunit beta-M (147 aa).

N-acetylvaline is present on valine 2. One can recognise a Globin domain in the interval 3–147 (HLTSEEKNCI…VAHALAHKYH (145 aa)). Threonine 13 is modified (phosphothreonine). Phosphoserine is present on serine 45. N6-acetyllysine is present on lysine 60. Histidine 64 provides a ligand contact to heme b. Lysine 83 is modified (N6-acetyllysine). Histidine 93 contacts heme b. S-nitrosocysteine is present on cysteine 94. Lysine 145 is subject to N6-acetyllysine.

The protein belongs to the globin family. As to quaternary structure, heterotetramer of two alpha chains and two beta chains. Red blood cells.

Functionally, involved in oxygen transport from the lung to the various peripheral tissues. This is Hemoglobin subunit beta-M (HBB) from Didelphis virginiana (North American opossum).